The sequence spans 544 residues: GMP synthase [glutamine-hydrolyzing] (544 aa).

The 199-residue stretch at 12–210 (TILILDFGSQ…VKNVCGVRDG (199 aa)) folds into the Glutamine amidotransferase type-1 domain. C88 functions as the Nucleophile in the catalytic mechanism. Residues H184 and E186 contribute to the active site. In terms of domain architecture, GMPS ATP-PPase spans 211–419 (WSMESFIPKE…LNIPEHLVGR (209 aa)). An ATP-binding site is contributed by 239–245 (SGGVDST). XMP contacts are provided by R312, D481, K536, and E542.

In terms of assembly, homodimer. Also forms a small population of homotetramers. Mg(2+) is required as a cofactor.

It is found in the cytoplasm. The protein localises to the cytosol. It carries out the reaction XMP + L-glutamine + ATP + H2O = GMP + L-glutamate + AMP + diphosphate + 2 H(+). It participates in purine metabolism; GMP biosynthesis; GMP from XMP (L-Gln route): step 1/1. With respect to regulation, the enzyme is inhibited by ECC1385; although this compound fails to inhibit growth of the organism. Functionally, catalyzes the conversion of xanthine monophosphate (XMP) to GMP in the presence of glutamine and ATP through an adenyl-XMP intermediate. The protein is GMP synthase [glutamine-hydrolyzing] of Cryptococcus neoformans var. grubii serotype A (strain H99 / ATCC 208821 / CBS 10515 / FGSC 9487) (Filobasidiella neoformans var. grubii).